Consider the following 942-residue polypeptide: Envelope glycoprotein (942 aa).

An N-terminal signal peptide occupies residues 1–80 (MDAGASYMRL…LLWTNMCVRA (80 aa)). N-linked (GlcNAc...) asparagine; by host glycosylation is found at Asn51, Asn98, Asn131, Asn176, Asn228, Asn331, Asn348, Asn354, Asn370, Asn379, Asn400, Asn404, Asn435, Asn441, Asn447, Asn457, Asn467, Asn481, Asn493, Asn503, Asn509, Asn527, and Asn534. Residues 81–799 (EDYITLISDP…SLKEVFDWSG (719 aa)) lie on the Extracellular side of the membrane. The fusion peptide stretch occupies residues 631-651 (GVGLVIMLVIMAIVAAAGASL). Coiled-coil stretches lie at residues 663-713 (KAAV…RIML) and 754-789 (RELQ…DVWE). Positions 697–713 (LEARVARVEAITDRIML) are immunosuppression. A helical membrane pass occupies residues 800-820 (WFSWLKYIPIIVVGLVGCILI). Topologically, residues 821-942 (RAVICVCQPL…VDCETWGKGD (122 aa)) are cytoplasmic.

In terms of assembly, the mature envelope protein (Env) consists of a trimer of SU-TM heterodimers attached by noncovalent interactions or by a labile interchain disulfide bond. In terms of processing, specific enzymatic cleavages in vivo yield mature proteins. Envelope glycoproteins are synthesized as an inactive precursor that is N-glycosylated and processed likely by host cell furin or by a furin-like protease in the Golgi to yield the mature SU and TM proteins. The cleavage site between SU and TM requires the minimal sequence [KR]-X-[KR]-R.

The protein localises to the virion membrane. The protein resides in the host cell membrane. Functionally, the surface protein (SU) attaches the virus to the host cell by binding to its receptor. This interaction triggers the refolding of the transmembrane protein (TM) and is thought to activate its fusogenic potential by unmasking its fusion peptide. Fusion occurs at the host cell plasma membrane. In terms of biological role, the transmembrane protein (TM) acts as a class I viral fusion protein. Under the current model, the protein has at least 3 conformational states: pre-fusion native state, pre-hairpin intermediate state, and post-fusion hairpin state. During viral and target cell membrane fusion, the coiled coil regions (heptad repeats) assume a trimer-of-hairpins structure, positioning the fusion peptide in close proximity to the C-terminal region of the ectodomain. The formation of this structure appears to drive apposition and subsequent fusion of viral and target cell membranes. Membranes fusion leads to delivery of the nucleocapsid into the cytoplasm. This is Envelope glycoprotein (env) from Caprine arthritis encephalitis virus (strain 63) (CAEV-63).